Here is a 25-residue protein sequence, read N- to C-terminus: Fructokinase-1 (25 aa).

It belongs to the ROK (NagC/XylR) family. Homodimer. Requires Mg(2+) as cofactor.

The catalysed reaction is D-fructose + ATP = D-fructose 6-phosphate + ADP + H(+). With respect to regulation, inhibition by zinc ions (Potential). Inactivated by EDTA. In Lactococcus lactis subsp. lactis (Streptococcus lactis), this protein is Fructokinase-1.